Reading from the N-terminus, the 449-residue chain is Bifunctional protein GlmU (449 aa).

The tract at residues 1-231 (MVRNCLSIVL…FDNVIGINNC (231 aa)) is pyrophosphorylase. UDP-N-acetyl-alpha-D-glucosamine-binding positions include 10–13 (LAAG), Lys-24, Gln-77, and 82–83 (GT). A Mg(2+)-binding site is contributed by Asp-107. The UDP-N-acetyl-alpha-D-glucosamine site is built by Gly-143, Glu-157, Asn-172, and Asn-229. Asn-229 is a Mg(2+) binding site. The tract at residues 232–252 (FELFEADALWQKRKARDLMLS) is linker. The interval 253–449 (GVTILKPESV…AHLSKNKRNK (197 aa)) is N-acetyltransferase. Arg-318 and Lys-336 together coordinate UDP-N-acetyl-alpha-D-glucosamine. The active-site Proton acceptor is His-348. Residues Tyr-351 and Asn-362 each contribute to the UDP-N-acetyl-alpha-D-glucosamine site. Residues Ala-365, 371–372 (NY), Ser-390, Ser-408, and Arg-425 each bind acetyl-CoA.

It in the N-terminal section; belongs to the N-acetylglucosamine-1-phosphate uridyltransferase family. The protein in the C-terminal section; belongs to the transferase hexapeptide repeat family. Homotrimer. Requires Mg(2+) as cofactor.

Its subcellular location is the cytoplasm. It catalyses the reaction alpha-D-glucosamine 1-phosphate + acetyl-CoA = N-acetyl-alpha-D-glucosamine 1-phosphate + CoA + H(+). The catalysed reaction is N-acetyl-alpha-D-glucosamine 1-phosphate + UTP + H(+) = UDP-N-acetyl-alpha-D-glucosamine + diphosphate. The protein operates within nucleotide-sugar biosynthesis; UDP-N-acetyl-alpha-D-glucosamine biosynthesis; N-acetyl-alpha-D-glucosamine 1-phosphate from alpha-D-glucosamine 6-phosphate (route II): step 2/2. It participates in nucleotide-sugar biosynthesis; UDP-N-acetyl-alpha-D-glucosamine biosynthesis; UDP-N-acetyl-alpha-D-glucosamine from N-acetyl-alpha-D-glucosamine 1-phosphate: step 1/1. Its pathway is bacterial outer membrane biogenesis; LPS lipid A biosynthesis. In terms of biological role, catalyzes the last two sequential reactions in the de novo biosynthetic pathway for UDP-N-acetylglucosamine (UDP-GlcNAc). The C-terminal domain catalyzes the transfer of acetyl group from acetyl coenzyme A to glucosamine-1-phosphate (GlcN-1-P) to produce N-acetylglucosamine-1-phosphate (GlcNAc-1-P), which is converted into UDP-GlcNAc by the transfer of uridine 5-monophosphate (from uridine 5-triphosphate), a reaction catalyzed by the N-terminal domain. This Bartonella bacilliformis (strain ATCC 35685 / KC583 / Herrer 020/F12,63) protein is Bifunctional protein GlmU.